Here is a 412-residue protein sequence, read N- to C-terminus: Non-specific lipid-transfer protein-like 2 (412 aa).

Positions 410-412 (SKI) match the Microbody targeting signal motif.

The protein belongs to the thiolase-like superfamily. Thiolase family. As to expression, expressed in intestine, hypodermis and body-wall muscle.

It localises to the peroxisome. The catalysed reaction is choloyl-CoA + propanoyl-CoA = 3alpha,7alpha,12alpha-trihydroxy-24-oxo-5beta-cholestan-26-oyl-CoA + CoA. With respect to regulation, inhibited by acetyl-CoA. In terms of biological role, catalyzes the thiolytic cleavage of 3-ketoacyl-CoA with 8-16 carbon residues in the acyl group using a ping-pong mechanism whereby binding to 3-ketooctanoyl-CoA results in the release of acetyl-CoA and the subsequent addition of CoA produces 3-ketohexanohyl-CoA. Involved in the biosynthesis of the dauer pheromone by providing short chains of fatty acid that are attached to the ascarylose sugars of the pheromone. This chain is Non-specific lipid-transfer protein-like 2, found in Caenorhabditis elegans.